We begin with the raw amino-acid sequence, 227 residues long: LysM and putative peptidoglycan-binding domain-containing protein 1 (227 aa).

A compositionally biased stretch (pro residues) spans 1–11; that stretch reads MASPSRQPPPG. A disordered region spans residues 1-22; the sequence is MASPSRQPPPGGSGLLQGSRAR. A phosphoserine mark is found at Ser23 and Ser33. The region spanning 40–84 is the LysM domain; it reads LEHQLEPGDTLAGLALKYGVTMEQIKRANRLYTNDSIFLKKTLYI. The tract at residues 97–150 is disordered; the sequence is LDSEEEKDGEEKVHPSNSEVWPHSTERKKQETGAGRANGEVLPTPGQETPTPIH. 4 positions are modified to phosphoserine: Ser99, Ser166, Ser194, and Ser212.

This chain is LysM and putative peptidoglycan-binding domain-containing protein 1 (LYSMD1), found in Homo sapiens (Human).